A 669-amino-acid polypeptide reads, in one-letter code: DNA ligase (669 aa).

NAD(+) contacts are provided by residues 34–38, 83–84, and E114; these read DAEYD and SL. K116 functions as the N6-AMP-lysine intermediate in the catalytic mechanism. Positions 137, 171, 287, and 311 each coordinate NAD(+). C405, C408, C423, and C428 together coordinate Zn(2+). Positions 591–669 constitute a BRCT domain; sequence NIASYFAGKT…EERFLQELNK (79 aa).

It belongs to the NAD-dependent DNA ligase family. LigA subfamily. It depends on Mg(2+) as a cofactor. Requires Mn(2+) as cofactor.

It catalyses the reaction NAD(+) + (deoxyribonucleotide)n-3'-hydroxyl + 5'-phospho-(deoxyribonucleotide)m = (deoxyribonucleotide)n+m + AMP + beta-nicotinamide D-nucleotide.. DNA ligase that catalyzes the formation of phosphodiester linkages between 5'-phosphoryl and 3'-hydroxyl groups in double-stranded DNA using NAD as a coenzyme and as the energy source for the reaction. It is essential for DNA replication and repair of damaged DNA. The polypeptide is DNA ligase (Bacillus cytotoxicus (strain DSM 22905 / CIP 110041 / 391-98 / NVH 391-98)).